The sequence spans 141 residues: Large ribosomal subunit protein uL11 (141 aa).

The protein belongs to the universal ribosomal protein uL11 family. In terms of assembly, part of the ribosomal stalk of the 50S ribosomal subunit. Interacts with L10 and the large rRNA to form the base of the stalk. L10 forms an elongated spine to which L12 dimers bind in a sequential fashion forming a multimeric L10(L12)X complex. One or more lysine residues are methylated.

Functionally, forms part of the ribosomal stalk which helps the ribosome interact with GTP-bound translation factors. This Thermotoga neapolitana (strain ATCC 49049 / DSM 4359 / NBRC 107923 / NS-E) protein is Large ribosomal subunit protein uL11.